Consider the following 111-residue polypeptide: Large ribosomal subunit protein uL24 (111 aa).

This sequence belongs to the universal ribosomal protein uL24 family. In terms of assembly, part of the 50S ribosomal subunit.

In terms of biological role, one of two assembly initiator proteins, it binds directly to the 5'-end of the 23S rRNA, where it nucleates assembly of the 50S subunit. Functionally, one of the proteins that surrounds the polypeptide exit tunnel on the outside of the subunit. The polypeptide is Large ribosomal subunit protein uL24 (Chlamydia trachomatis serovar A (strain ATCC VR-571B / DSM 19440 / HAR-13)).